The sequence spans 211 residues: MANTDRPALPHKRAVPPSRADSGPRRRRTKLLDAVAGFGVTLGSMFKKTVTEEYPERPGPVAARYHGRHQLNRYPDGLEKCIGCELCAWACPADAIYVEGADNTEEERFSPGERYGRVYQINYLRCIGCGLCIEACPTRALTMTYDYELADDNRADLIYEKDRLLAPLLPEMAAPPHPRAPGATDKDYYLGNVTAEGLRGVRESQTTGDSR.

A disordered region spans residues 1-27 (MANTDRPALPHKRAVPPSRADSGPRRR). 4Fe-4S ferredoxin-type domains are found at residues 71–101 (LNRY…VEGA) and 117–146 (RVYQ…MTYD). C81, C84, C87, C91, C126, C129, C132, and C136 together coordinate [4Fe-4S] cluster.

The protein belongs to the complex I 23 kDa subunit family. NDH-1 is composed of 14 different subunits. Subunits NuoA, H, J, K, L, M, N constitute the membrane sector of the complex. [4Fe-4S] cluster is required as a cofactor.

Its subcellular location is the cell membrane. The catalysed reaction is a quinone + NADH + 5 H(+)(in) = a quinol + NAD(+) + 4 H(+)(out). NDH-1 shuttles electrons from NADH, via FMN and iron-sulfur (Fe-S) centers, to quinones in the respiratory chain. The immediate electron acceptor for the enzyme in this species is believed to be menaquinone. Couples the redox reaction to proton translocation (for every two electrons transferred, four hydrogen ions are translocated across the cytoplasmic membrane), and thus conserves the redox energy in a proton gradient. This is NADH-quinone oxidoreductase subunit I from Mycobacterium bovis (strain ATCC BAA-935 / AF2122/97).